Here is an 86-residue protein sequence, read N- to C-terminus: Putative membrane protein insertion efficiency factor (86 aa).

It belongs to the UPF0161 family.

The protein localises to the cell inner membrane. Its function is as follows. Could be involved in insertion of integral membrane proteins into the membrane. This chain is Putative membrane protein insertion efficiency factor, found in Histophilus somni (strain 129Pt) (Haemophilus somnus).